A 1560-amino-acid chain; its full sequence is BRD4-interacting chromatin-remodeling complex-associated protein (1560 aa).

6 disordered regions span residues 53-99 (VQEA…GADQ), 624-688 (APQA…ATPT), 723-949 (IVSA…VTTP), 974-1028 (NKAG…TGLP), 1049-1075 (KAAS…KPPT), and 1215-1300 (SSEG…IKTY). Over residues 86–96 (ATGGGGGGSGG) the composition is skewed to gly residues. Residues 624–664 (APQAPPAVSTPLPLGLQQPQAQQPPQAPTPQAAAPPQATTP) show a composition bias toward low complexity. Residues 726-736 (APPPAQDPAPA) show a composition bias toward pro residues. Positions 747 to 780 (PQAPDSQASPAPAPQIPAAAPLKGPGPSSSPSLP) are enriched in low complexity. 3 stretches are compositionally biased toward pro residues: residues 791–806 (LPSP…PPSR), 814–831 (PSEP…PPTL), and 843–880 (VPPP…PHLP). A compositionally biased stretch (low complexity) spans 881-896 (PSSTSSAVASSSETSS). Ser-919 is modified (phosphoserine). Thr-921 carries the post-translational modification Phosphothreonine. The span at 932 to 941 (PAAPPPPPPR) shows a compositional bias: pro residues. Low complexity predominate over residues 1005-1028 (APSGTPTAPSHAPAPAPMAATGLP). An N6-acetyllysine modification is found at Lys-1057. Positions 1227 to 1236 (LSSSAPGAST) are enriched in polar residues. Positions 1264–1281 (ASSSLSSSSSSSSAASSL) are enriched in low complexity. Lys-1313 participates in a covalent cross-link: Glycyl lysine isopeptide (Lys-Gly) (interchain with G-Cter in SUMO2). Disordered regions lie at residues 1324 to 1424 (NTAL…VDEA) and 1440 to 1560 (YQRM…TLTR). The segment covering 1331 to 1356 (HQPPPPPATLKVAEPPPRPPPPPPPT) has biased composition (pro residues). Over residues 1401–1412 (PEGTPAGRARGG) the composition is skewed to low complexity. Ser-1413 carries the phosphoserine modification. The segment covering 1485-1515 (ASFSSDSPQDDTLTEHLQSAIDSILNLQQAP) has biased composition (polar residues).

As to quaternary structure, component of the multiprotein chromatin-remodeling complexes SWI/SNF: SWI/SNF-A (BAF), SWI/SNF-B (PBAF) and related complexes. The canonical complex contains a catalytic subunit (either SMARCA4/BRG1/BAF190A or SMARCA2/BRM/BAF190B) and at least SMARCE1, ACTL6A/BAF53, SMARCC1/BAF155, SMARCC2/BAF170, and SMARCB1/SNF5/BAF47. Other subunits specific to each of the complexes may also be present permitting several possible combinations developmentally and tissue specific. Component of the SWI/SNF (GBAF) subcomplex, which includes at least BICRA or BICRAL (mutually exclusive), BRD9, SS18, the core BAF subunits, SMARCA2/BRM, SMARCA4/BRG1/BAF190A, ACTL6A/BAF53, SMARCC1/BAF155, and SMARCD1/BAF60A. Interacts with BRD4; the interaction bridges BRD4 to the GBAF complex. Expressed at moderate levels in heart, brain, placenta, skeletal muscle, and pancreas, and at lower levels in lung, liver and kidney.

Its subcellular location is the nucleus. Its function is as follows. Component of SWI/SNF chromatin remodeling subcomplex GBAF that carries out key enzymatic activities, changing chromatin structure by altering DNA-histone contacts within a nucleosome in an ATP-dependent manner. May play a role in BRD4-mediated gene transcription. The protein is BRD4-interacting chromatin-remodeling complex-associated protein of Homo sapiens (Human).